The sequence spans 245 residues: Large ribosomal subunit protein uL4 (245 aa).

Polar residues predominate over residues Met-1–Ala-13. 3 disordered regions span residues Met-1 to Ser-28, Ala-56 to Pro-114, and Thr-224 to Lys-245. Basic and acidic residues predominate over residues Gly-59–Gly-71. The span at Gly-72–Gly-83 shows a compositional bias: basic residues.

It belongs to the universal ribosomal protein uL4 family. In terms of assembly, part of the 50S ribosomal subunit.

One of the primary rRNA binding proteins, this protein initially binds near the 5'-end of the 23S rRNA. It is important during the early stages of 50S assembly. It makes multiple contacts with different domains of the 23S rRNA in the assembled 50S subunit and ribosome. In terms of biological role, forms part of the polypeptide exit tunnel. The polypeptide is Large ribosomal subunit protein uL4 (Frankia casuarinae (strain DSM 45818 / CECT 9043 / HFP020203 / CcI3)).